The primary structure comprises 378 residues: Zinc transporter 7 (378 aa).

Over Met1 to Asn37 the chain is Cytoplasmic. Residues Leu38 to Trp58 form a helical membrane-spanning segment. At Ser59–Asp67 the chain is on the lumenal side. The chain crosses the membrane as a helical span at residues Ser68–Ser88. Topologically, residues Lys89–Arg102 are cytoplasmic. A helical membrane pass occupies residues Ala103–Phe123. The Lumenal segment spans residues Ser124 to Arg140. A helical transmembrane segment spans residues Leu141–His161. The interval His161–His223 is his-rich loop. The Cytoplasmic segment spans residues Gly162–Gly238. The disordered stretch occupies residues His185 to His214. The span at Gly186–Gly211 shows a compositional bias: basic residues. Residues Val239–Leu259 traverse the membrane as a helical segment. Residues Met260–Gly264 lie on the Lumenal side of the membrane. A helical membrane pass occupies residues Leu265–Val285. At Pro286–Met378 the chain is on the cytoplasmic side.

Belongs to the cation diffusion facilitator (CDF) transporter (TC 2.A.4) family. SLC30A subfamily. In terms of assembly, homooligomer.

It localises to the golgi apparatus membrane. The protein resides in the cytoplasmic vesicle. It is found in the golgi apparatus. The protein localises to the trans-Golgi network. Its subcellular location is the sarcoplasmic reticulum. It localises to the mitochondrion. The catalysed reaction is Zn(2+)(in) = Zn(2+)(out). Functionally, zinc ion transporter mediating zinc entry from the cytosol into the lumen of organelles along the secretory pathway. By contributing to zinc ion homeostasis within the early secretory pathway, regulates the activation and folding of enzymes like alkaline phosphatases. In Gallus gallus (Chicken), this protein is Zinc transporter 7 (SLC30A7).